A 313-amino-acid chain; its full sequence is MMLDVAPPRFRVEEEDERHGIFVAEPLPRGLGHTLGNALRRVMLSGLPGAAVTKLRIEGVQHEFSTIEGVREDVVDIILNVKQLKFRLERDEPIELQISKDGPGEVRGSDIELKADVEVVNPDAYIASLSEGGHLDMTLTVERGQGYVPAEQNKSDADPIGVIAVDSLFSPVEKVQYRVSETRAGARVDLDALTLEVFTDGRLGPREALREASRKLIDFFGLFAEGYQGAGAAEEPGRSGGRPVITDERPIEDLELTVRSYNCLKREGVDTIGQLATMTEEELMNIRNLGMKSVDEIRSKLEEYGYTLESGRE.

The alpha N-terminal domain (alpha-NTD) stretch occupies residues 1 to 227 (MMLDVAPPRF…DFFGLFAEGY (227 aa)). The alpha C-terminal domain (alpha-CTD) stretch occupies residues 242 to 313 (RPVITDERPI…YGYTLESGRE (72 aa)).

It belongs to the RNA polymerase alpha chain family. As to quaternary structure, homodimer. The RNAP catalytic core consists of 2 alpha, 1 beta, 1 beta' and 1 omega subunit. When a sigma factor is associated with the core the holoenzyme is formed, which can initiate transcription.

The catalysed reaction is RNA(n) + a ribonucleoside 5'-triphosphate = RNA(n+1) + diphosphate. In terms of biological role, DNA-dependent RNA polymerase catalyzes the transcription of DNA into RNA using the four ribonucleoside triphosphates as substrates. The polypeptide is DNA-directed RNA polymerase subunit alpha (Rubrobacter xylanophilus (strain DSM 9941 / JCM 11954 / NBRC 16129 / PRD-1)).